Reading from the N-terminus, the 1199-residue chain is DNA-directed RNA polymerase subunit beta (1199 aa).

The tract at residues 1177-1199 (EQEEKKAKEAEQETAEKEETKTE) is disordered.

It belongs to the RNA polymerase beta chain family. The RNAP catalytic core consists of 2 alpha, 1 beta, 1 beta' and 1 omega subunit. When a sigma factor is associated with the core the holoenzyme is formed, which can initiate transcription.

The catalysed reaction is RNA(n) + a ribonucleoside 5'-triphosphate = RNA(n+1) + diphosphate. In terms of biological role, DNA-dependent RNA polymerase catalyzes the transcription of DNA into RNA using the four ribonucleoside triphosphates as substrates. This Ligilactobacillus salivarius (strain UCC118) (Lactobacillus salivarius) protein is DNA-directed RNA polymerase subunit beta.